A 261-amino-acid polypeptide reads, in one-letter code: Succinate dehydrogenase iron-sulfur subunit (261 aa).

Positions Met1–Glu23 are disordered. The 2Fe-2S ferredoxin-type domain occupies Arg28–Met119. Positions 80, 85, and 100 each coordinate [2Fe-2S] cluster. Positions Gly161–Tyr191 constitute a 4Fe-4S ferredoxin-type domain. The [4Fe-4S] cluster site is built by Cys171, Cys174, and Cys177. Cys181 provides a ligand contact to [3Fe-4S] cluster. Residue Trp186 participates in a ubiquinone binding. [3Fe-4S] cluster contacts are provided by Cys228 and Cys234. [4Fe-4S] cluster is bound at residue Cys238.

This sequence belongs to the succinate dehydrogenase/fumarate reductase iron-sulfur protein family. Part of an enzyme complex containing four subunits: a flavoprotein, an iron-sulfur, cytochrome b-556, and a hydrophobic anchor protein. [2Fe-2S] cluster serves as cofactor. [3Fe-4S] cluster is required as a cofactor. The cofactor is [4Fe-4S] cluster.

The catalysed reaction is a quinone + succinate = fumarate + a quinol. It functions in the pathway carbohydrate metabolism; tricarboxylic acid cycle; fumarate from succinate (bacterial route): step 1/1. The protein is Succinate dehydrogenase iron-sulfur subunit (sdhB) of Rickettsia felis (strain ATCC VR-1525 / URRWXCal2) (Rickettsia azadi).